The primary structure comprises 277 residues: Large ribosomal subunit protein uL2 (277 aa).

Residues 223-277 (VAMNPVDHPHGGGEGRTSTGRHPVTPWGKRTLGKKTRKRKASDKYIIRSRRARKR) are disordered. Basic residues predominate over residues 253 to 277 (TLGKKTRKRKASDKYIIRSRRARKR).

The protein belongs to the universal ribosomal protein uL2 family. Part of the 50S ribosomal subunit. Forms a bridge to the 30S subunit in the 70S ribosome.

Its function is as follows. One of the primary rRNA binding proteins. Required for association of the 30S and 50S subunits to form the 70S ribosome, for tRNA binding and peptide bond formation. It has been suggested to have peptidyltransferase activity; this is somewhat controversial. Makes several contacts with the 16S rRNA in the 70S ribosome. The chain is Large ribosomal subunit protein uL2 from Halothermothrix orenii (strain H 168 / OCM 544 / DSM 9562).